We begin with the raw amino-acid sequence, 840 residues long: Probable inorganic carbon transporter subunit DabA 2 (840 aa).

4 residues coordinate Zn(2+): C356, D358, H540, and C555.

Belongs to the inorganic carbon transporter (TC 9.A.2) DabA family. As to quaternary structure, forms a complex with DabB. Zn(2+) serves as cofactor.

It localises to the cell inner membrane. Its function is as follows. Part of an energy-coupled inorganic carbon pump. In Bradyrhizobium sp. (strain ORS 278), this protein is Probable inorganic carbon transporter subunit DabA 2.